The following is a 502-amino-acid chain: UDP-N-acetylmuramoylalanine--D-glutamate ligase (502 aa).

129 to 135 contributes to the ATP binding site; it reads GTNGKTT. Residues 288–307 are disordered; sequence APDETTSRRRKRDGAHTPDI.

Belongs to the MurCDEF family.

The protein resides in the cytoplasm. It catalyses the reaction UDP-N-acetyl-alpha-D-muramoyl-L-alanine + D-glutamate + ATP = UDP-N-acetyl-alpha-D-muramoyl-L-alanyl-D-glutamate + ADP + phosphate + H(+). Its pathway is cell wall biogenesis; peptidoglycan biosynthesis. Its function is as follows. Cell wall formation. Catalyzes the addition of glutamate to the nucleotide precursor UDP-N-acetylmuramoyl-L-alanine (UMA). The chain is UDP-N-acetylmuramoylalanine--D-glutamate ligase from Burkholderia ambifaria (strain ATCC BAA-244 / DSM 16087 / CCUG 44356 / LMG 19182 / AMMD) (Burkholderia cepacia (strain AMMD)).